We begin with the raw amino-acid sequence, 264 residues long: Thymidylate synthase (264 aa).

Residue arginine 21 coordinates dUMP. Histidine 51 lines the (6R)-5,10-methylene-5,6,7,8-tetrahydrofolate pocket. 126–127 (RR) contacts dUMP. Cysteine 146 functions as the Nucleophile in the catalytic mechanism. DUMP is bound by residues 166-169 (RSAD), asparagine 177, and 207-209 (HIY). Position 169 (aspartate 169) interacts with (6R)-5,10-methylene-5,6,7,8-tetrahydrofolate. Residue alanine 263 participates in (6R)-5,10-methylene-5,6,7,8-tetrahydrofolate binding.

Belongs to the thymidylate synthase family. Bacterial-type ThyA subfamily. Homodimer.

It localises to the cytoplasm. It catalyses the reaction dUMP + (6R)-5,10-methylene-5,6,7,8-tetrahydrofolate = 7,8-dihydrofolate + dTMP. Its pathway is pyrimidine metabolism; dTTP biosynthesis. Its function is as follows. Catalyzes the reductive methylation of 2'-deoxyuridine-5'-monophosphate (dUMP) to 2'-deoxythymidine-5'-monophosphate (dTMP) while utilizing 5,10-methylenetetrahydrofolate (mTHF) as the methyl donor and reductant in the reaction, yielding dihydrofolate (DHF) as a by-product. This enzymatic reaction provides an intracellular de novo source of dTMP, an essential precursor for DNA biosynthesis. In Coxiella burnetii (strain Dugway 5J108-111), this protein is Thymidylate synthase.